The following is a 291-amino-acid chain: Phosphate import ATP-binding protein PstB (291 aa).

Residues 1–17 (MANTNVKEKELAKHTDQ) are compositionally biased toward basic and acidic residues. Positions 1–40 (MANTNVKEKELAKHTDQSQESISTVVSSNEVKHNKESDSN) are disordered. The span at 18–29 (SQESISTVVSSN) shows a compositional bias: polar residues. Residues 30–40 (EVKHNKESDSN) show a composition bias toward basic and acidic residues. The 242-residue stretch at 45 to 286 (YSTQNLDLWY…PSDKQTEDYI (242 aa)) folds into the ABC transporter domain. 77–84 (GPSGCGKS) lines the ATP pocket.

This sequence belongs to the ABC transporter superfamily. Phosphate importer (TC 3.A.1.7) family. In terms of assembly, the complex is composed of two ATP-binding proteins (PstB), two transmembrane proteins (PstC and PstA) and a solute-binding protein (PstS).

Its subcellular location is the cell membrane. It catalyses the reaction phosphate(out) + ATP + H2O = ADP + 2 phosphate(in) + H(+). Part of the ABC transporter complex PstSACB involved in phosphate import. Responsible for energy coupling to the transport system. This is Phosphate import ATP-binding protein PstB from Staphylococcus haemolyticus (strain JCSC1435).